Here is an 877-residue protein sequence, read N- to C-terminus: MAGLDLSLVLMLSVLAGVREVSLTQVNQQGVIAPGDIIIGGLFPIHEAAEAVNFTGLNSFSSFQHPVCNRYYTKGLNQALAMIHAVEMANQSPMLSSLNLTLGYRIYDTCSDVTTALWAVQDLTRPYSYCDSQTNSSQPVQPIMAVIGPSSSEISIAVARELNLLMIPQISYASTATILSDKSRFPAFMRTVPNDEYQTHAMVQLLKDNKWTWVGIIITDGDYGRSAMESFVKHTEREGICVAFKVILPDSLADEQKLNIHINETVDIIEKNTKVNVVVSFAKSSQMKLLYEGLRSRNVPKNKVWVASDNWSTSKNILKDVNLSDIGNILGFTFKSGNVTAFLQYLKDLKFGSEAKMNNSFLEEFLKLPEIGNAANAVQEQIKNTHLDMVFSVQMAVSAIAKAVVELCVERQCKTPSAIQPWELLKQLRNVTFEKEGVMYNFDANGDINLGYDVCLWDDDESEKNDIIAEYYPSNSSFTFTRKNLSNIENVLSKCSDSCQPGEYKKTAEGQHTCCYECLACAENQYSNHTDADTCSKCDTESLWSNANSSKCYPKFYEYFEWNSGFAIALLTLAALGILLLISMSALFFWQRNSLVVKAAGGPLCHLILFSLLGSFISVIFFVGEPSNESCRVRQVIFGLSFTLCVSCILVKSLKILLAFQMNLELKELLRKLYKPYVIVCMCMGLQVTICTLWLTLHRPFIEKVVQPKSILLECNEGSDLMFGLMLGYIVLLALICFTFAYKGRKLPQKYNEAKFITFGMLIYLMAWVIFIPVHVTTSGKYVPAVEVVVILISNYGILSCHFLPKCYIIIFKKEYNTKDAFLKNVFEYARKSSENIRGLSGTDPHSKTDNSVYVISNPSLVPEEKQVSVPEIDNVL.

The N-terminal stretch at 1 to 24 is a signal peptide; it reads MAGLDLSLVLMLSVLAGVREVSLT. Topologically, residues 25–567 are extracellular; it reads QVNQQGVIAP…EYFEWNSGFA (543 aa). 8 N-linked (GlcNAc...) asparagine glycosylation sites follow: N53, N99, N135, N263, N310, N322, N338, and N358. D388 contributes to the L-lysine binding site. N-linked (GlcNAc...) asparagine glycosylation is found at N430, N475, N484, N528, and N548. The helical transmembrane segment at 568 to 588 threads the bilayer; that stretch reads IALLTLAALGILLLISMSALF. Residues 589–603 lie on the Cytoplasmic side of the membrane; it reads FWQRNSLVVKAAGGP. The chain crosses the membrane as a helical span at residues 604–624; that stretch reads LCHLILFSLLGSFISVIFFVG. At 625-635 the chain is on the extracellular side; that stretch reads EPSNESCRVRQ. N628 is a glycosylation site (N-linked (GlcNAc...) asparagine). Residues 636 to 656 traverse the membrane as a helical segment; it reads VIFGLSFTLCVSCILVKSLKI. Residues 657–676 are Cytoplasmic-facing; the sequence is LLAFQMNLELKELLRKLYKP. Residues 677–697 form a helical membrane-spanning segment; sequence YVIVCMCMGLQVTICTLWLTL. At 698–720 the chain is on the extracellular side; it reads HRPFIEKVVQPKSILLECNEGSD. A helical transmembrane segment spans residues 721–741; the sequence is LMFGLMLGYIVLLALICFTFA. The Cytoplasmic segment spans residues 742 to 755; that stretch reads YKGRKLPQKYNEAK. Residues 756–776 traverse the membrane as a helical segment; the sequence is FITFGMLIYLMAWVIFIPVHV. Residues 777-782 lie on the Extracellular side of the membrane; it reads TTSGKY. A helical membrane pass occupies residues 783 to 803; the sequence is VPAVEVVVILISNYGILSCHF. Residues 804 to 877 lie on the Cytoplasmic side of the membrane; sequence LPKCYIIIFK…VSVPEIDNVL (74 aa).

Belongs to the G-protein coupled receptor 3 family. Homodimer; disulfide-linked. As to expression, expressed in olfactory epithelium. Also expressed in gills, tongue, lips and palatal organ. Not expressed in brain, kidney, liver, muscle, intestine, ovary and skin. In olfactory epithelium, it is widely expressed over the apical and medial portions of the olfactory sensory neurons, regions that contain olfactory neurons. Expressed in external epithelia, which contains taste buds and solitary chemosensory cells. On gill rakers, it is widely expressed in the surface epithelium, but excluded from taste buds.

It localises to the cell membrane. Functionally, olfactory receptor that is activated by amino acids that act as potent odorants in fish. Most highly activated by basic amino acids such as L-lysine and L-arginine. The polypeptide is G-protein coupled receptor family C group 6 member A (gprc6a) (Carassius auratus (Goldfish)).